We begin with the raw amino-acid sequence, 246 residues long: Bis(5'-nucleosyl)-tetraphosphatase PrpE [asymmetrical] (246 aa).

It belongs to the PrpE family. Ni(2+) is required as a cofactor.

The catalysed reaction is P(1),P(4)-bis(5'-guanosyl) tetraphosphate + H2O = GMP + GTP + 2 H(+). Asymmetrically hydrolyzes Ap4p to yield AMP and ATP. The sequence is that of Bis(5'-nucleosyl)-tetraphosphatase PrpE [asymmetrical] from Bacillus anthracis (strain A0248).